Reading from the N-terminus, the 457-residue chain is tRNA modification GTPase MnmE (457 aa).

Positions 23, 85, and 124 each coordinate (6S)-5-formyl-5,6,7,8-tetrahydrofolate. The TrmE-type G domain maps to 220–376 (GALVVLAGQV…LVTAIRAAVL (157 aa)). K(+) is bound at residue Asn230. GTP is bound by residues 230–235 (NAGKSS), 249–255 (TDLPGTT), and 274–277 (DTAG). Ser234 provides a ligand contact to Mg(2+). K(+)-binding residues include Thr249, Leu251, and Thr254. Thr255 is a binding site for Mg(2+). Lys457 serves as a coordination point for (6S)-5-formyl-5,6,7,8-tetrahydrofolate.

The protein belongs to the TRAFAC class TrmE-Era-EngA-EngB-Septin-like GTPase superfamily. TrmE GTPase family. As to quaternary structure, homodimer. Heterotetramer of two MnmE and two MnmG subunits. K(+) is required as a cofactor.

The protein localises to the cytoplasm. In terms of biological role, exhibits a very high intrinsic GTPase hydrolysis rate. Involved in the addition of a carboxymethylaminomethyl (cmnm) group at the wobble position (U34) of certain tRNAs, forming tRNA-cmnm(5)s(2)U34. In Nitratidesulfovibrio vulgaris (strain DP4) (Desulfovibrio vulgaris), this protein is tRNA modification GTPase MnmE.